Here is a 244-residue protein sequence, read N- to C-terminus: ATP-dependent dethiobiotin synthetase BioD 1 (244 aa).

An ATP-binding site is contributed by 12–17 (NVGKTV). Thr-16 serves as a coordination point for Mg(2+). Residue Lys-37 is part of the active site. Asp-68 contributes to the ATP binding site. Mg(2+) is bound by residues Asp-68 and Glu-126. ATP is bound by residues 186–187 (NR), 215–217 (PYL), and Glu-222.

This sequence belongs to the dethiobiotin synthetase family. In terms of assembly, homodimer. Requires Mg(2+) as cofactor.

It is found in the cytoplasm. It carries out the reaction (7R,8S)-7,8-diammoniononanoate + CO2 + ATP = (4R,5S)-dethiobiotin + ADP + phosphate + 3 H(+). It participates in cofactor biosynthesis; biotin biosynthesis; biotin from 7,8-diaminononanoate: step 1/2. Its function is as follows. Catalyzes a mechanistically unusual reaction, the ATP-dependent insertion of CO2 between the N7 and N8 nitrogen atoms of 7,8-diaminopelargonic acid (DAPA, also called 7,8-diammoniononanoate) to form a ureido ring. This Pasteurella multocida (strain Pm70) protein is ATP-dependent dethiobiotin synthetase BioD 1.